The sequence spans 462 residues: MIEVSAVAGYTPSVEISLTPREAPQMTKKLFVKTYGCQMNVYDSERMAEALGGEGYEQVNTPEGADMILLNTCHIREKAAEKMYSELGRLRPLRDANPDLKIGVAGCVAQAEGEEIMRRQPLVDLVVGPQTYHRLPKMMEAVNAGEKALDTDFPEEDKFLNLPKARATRGPTAFLTVQEGCDKFCAFCVVPYTRGAEVSRSAERLMAEARDLVDRGVREITLLGQNVNAYHGAGDGGTWGLARLIREMAKIDGLDRIRFTTSHPNDMEDDLIAAHGDCPELMPYLHLPVQAGSDKILKAMNRKHTAADYIRLIDRIRDARPDLHLSGDFIVGFPGETEEDFQATLDLVETVGYGTAYSFKYSARPGTPAAERTGQVSEAEASDRLQRLQALLTQQQRAAQDAMVGRRVKVLFEKPGRNPGQMIGKSEYLHSVHVDGPDTLRGQIAEVEIAESKTNSLTGRLV.

One can recognise an MTTase N-terminal domain in the interval 28–144 (KKLFVKTYGC…LPKMMEAVNA (117 aa)). [4Fe-4S] cluster contacts are provided by Cys-37, Cys-73, Cys-107, Cys-181, Cys-185, and Cys-188. A Radical SAM core domain is found at 167 to 398 (ATRGPTAFLT…QALLTQQQRA (232 aa)). The TRAM domain maps to 401 to 462 (DAMVGRRVKV…KTNSLTGRLV (62 aa)).

It belongs to the methylthiotransferase family. MiaB subfamily. As to quaternary structure, monomer. The cofactor is [4Fe-4S] cluster.

Its subcellular location is the cytoplasm. It catalyses the reaction N(6)-dimethylallyladenosine(37) in tRNA + (sulfur carrier)-SH + AH2 + 2 S-adenosyl-L-methionine = 2-methylsulfanyl-N(6)-dimethylallyladenosine(37) in tRNA + (sulfur carrier)-H + 5'-deoxyadenosine + L-methionine + A + S-adenosyl-L-homocysteine + 2 H(+). In terms of biological role, catalyzes the methylthiolation of N6-(dimethylallyl)adenosine (i(6)A), leading to the formation of 2-methylthio-N6-(dimethylallyl)adenosine (ms(2)i(6)A) at position 37 in tRNAs that read codons beginning with uridine. This Jannaschia sp. (strain CCS1) protein is tRNA-2-methylthio-N(6)-dimethylallyladenosine synthase.